A 212-amino-acid polypeptide reads, in one-letter code: uncharacterized protein (212 aa).

2 disordered regions span residues 1–25 and 165–212; these read MARKRKSRNNSKIGHGAISRIGRPN and STSG…HWGG. Residues 202 to 212 are compositionally biased toward low complexity; the sequence is RSSSARGHWGG.

This is an uncharacterized protein from Escherichia coli (strain K12).